The chain runs to 127 residues: Aspartate 1-decarboxylase (127 aa).

Serine 25 (schiff-base intermediate with substrate; via pyruvic acid) is an active-site residue. Serine 25 bears the Pyruvic acid (Ser) mark. Threonine 57 lines the substrate pocket. Tyrosine 58 serves as the catalytic Proton donor. 73 to 75 (GAA) lines the substrate pocket.

This sequence belongs to the PanD family. As to quaternary structure, heterooctamer of four alpha and four beta subunits. Pyruvate is required as a cofactor. Is synthesized initially as an inactive proenzyme, which is activated by self-cleavage at a specific serine bond to produce a beta-subunit with a hydroxyl group at its C-terminus and an alpha-subunit with a pyruvoyl group at its N-terminus.

The protein resides in the cytoplasm. The enzyme catalyses L-aspartate + H(+) = beta-alanine + CO2. The protein operates within cofactor biosynthesis; (R)-pantothenate biosynthesis; beta-alanine from L-aspartate: step 1/1. Catalyzes the pyruvoyl-dependent decarboxylation of aspartate to produce beta-alanine. This is Aspartate 1-decarboxylase from Clostridium kluyveri (strain NBRC 12016).